The primary structure comprises 391 residues: Alpha-2B adrenergic receptor (391 aa).

A helical transmembrane segment spans residues 1–25; sequence AIAAVITFLILFTIFGNALVILAVL. At 26–36 the chain is on the cytoplasmic side; sequence TSRSLRAPQNL. A helical transmembrane segment spans residues 37–62; it reads FLVSLAAADILVATLIIPFSLANELL. Over 63 to 72 the chain is Extracellular; the sequence is GYWYFRRTWC. Cysteines 72 and 151 form a disulfide. The helical transmembrane segment at 73 to 95 threads the bilayer; sequence EVYLALDVLFCTSSIVHLCAISL. Over 96 to 117 the chain is Cytoplasmic; sequence DRYWAVSRALEYNSKRTPRRIK. A helical transmembrane segment spans residues 118 to 140; that stretch reads CIILTVWLIAAVISLPPLIYKGD. Topologically, residues 141–156 are extracellular; it reads QGPQPRGRPQCKLNQE. Residues 157 to 180 form a helical membrane-spanning segment; sequence AWYILASSIGSFFAPCLIMILVYL. Topologically, residues 181–355 are cytoplasmic; that stretch reads RIYLIAKRSH…LTREKRFTFV (175 aa). Disordered stretches follow at residues 194–218 and 233–312; these read PRAK…APSS and EANR…PLQQ. Basic and acidic residues predominate over residues 233–247; the sequence is EANRHSKSTGEKVEG. The span at 256–266 shows a compositional bias: pro residues; the sequence is PGVPPSWPPLP. Residues 271-281 show a composition bias toward basic and acidic residues; that stretch reads GQEEDIYRASP. Residues 282 to 294 show a composition bias toward acidic residues; that stretch reads EEEAGDDEEEECE. A compositionally biased stretch (low complexity) spans 295 to 309; it reads PQAVPVSPASACSPP. Residues 356–379 form a helical membrane-spanning segment; it reads LAVVIGVFVLCWFPFFFSYSLGAI. Over 380–388 the chain is Extracellular; that stretch reads CPQHCKVPH. The helical transmembrane segment at 389-391 threads the bilayer; it reads GLF.

It belongs to the G-protein coupled receptor 1 family. Adrenergic receptor subfamily. ADRA2B sub-subfamily. As to quaternary structure, interacts with RAB26. Interacts with PPP1R9B. Interacts with GGA1, GGA2 and GGA3.

The protein resides in the cell membrane. In terms of biological role, alpha-2 adrenergic receptors mediate the catecholamine-induced inhibition of adenylate cyclase through the action of G proteins. This is Alpha-2B adrenergic receptor (ADRA2B) from Erinaceus europaeus (Western European hedgehog).